The chain runs to 251 residues: Triosephosphate isomerase (251 aa).

Residues Asn10 and Lys12 each coordinate substrate. His95 functions as the Electrophile in the catalytic mechanism. Glu167 (proton acceptor) is an active-site residue.

Belongs to the triosephosphate isomerase family. As to quaternary structure, homodimer.

The enzyme catalyses D-glyceraldehyde 3-phosphate = dihydroxyacetone phosphate. It functions in the pathway carbohydrate biosynthesis; gluconeogenesis. The protein operates within carbohydrate degradation; glycolysis; D-glyceraldehyde 3-phosphate from glycerone phosphate: step 1/1. The sequence is that of Triosephosphate isomerase (TPI) from Coprinopsis cinerea (strain Okayama-7 / 130 / ATCC MYA-4618 / FGSC 9003) (Inky cap fungus).